Reading from the N-terminus, the 539-residue chain is Eukaryotic translation initiation factor 3 subunit L (539 aa).

Residues 306-514 enclose the PCI domain; sequence TFSDILLYIQ…IHIADTKVSH (209 aa).

It belongs to the eIF-3 subunit L family. In terms of assembly, component of the eukaryotic translation initiation factor 3 (eIF-3) complex. The eIF-3 complex interacts with pix.

The protein localises to the cytoplasm. Component of the eukaryotic translation initiation factor 3 (eIF-3) complex, which is involved in protein synthesis of a specialized repertoire of mRNAs and, together with other initiation factors, stimulates binding of mRNA and methionyl-tRNAi to the 40S ribosome. The eIF-3 complex specifically targets and initiates translation of a subset of mRNAs involved in cell proliferation. This Drosophila ananassae (Fruit fly) protein is Eukaryotic translation initiation factor 3 subunit L.